The chain runs to 472 residues: Uronate isomerase (472 aa).

Belongs to the metallo-dependent hydrolases superfamily. Uronate isomerase family.

The enzyme catalyses D-glucuronate = D-fructuronate. It carries out the reaction aldehydo-D-galacturonate = keto-D-tagaturonate. It participates in carbohydrate metabolism; pentose and glucuronate interconversion. This Xanthomonas axonopodis pv. citri (strain 306) protein is Uronate isomerase.